Here is a 430-residue protein sequence, read N- to C-terminus: Serine--tRNA ligase (430 aa).

235–237 (TAE) provides a ligand contact to L-serine. ATP contacts are provided by residues 266-268 (RRE) and valine 282. Glutamate 289 serves as a coordination point for L-serine. 353–356 (EASS) contacts ATP. Serine 389 contacts L-serine.

This sequence belongs to the class-II aminoacyl-tRNA synthetase family. Type-1 seryl-tRNA synthetase subfamily. In terms of assembly, homodimer. The tRNA molecule binds across the dimer.

The protein resides in the cytoplasm. The enzyme catalyses tRNA(Ser) + L-serine + ATP = L-seryl-tRNA(Ser) + AMP + diphosphate + H(+). The catalysed reaction is tRNA(Sec) + L-serine + ATP = L-seryl-tRNA(Sec) + AMP + diphosphate + H(+). Its pathway is aminoacyl-tRNA biosynthesis; selenocysteinyl-tRNA(Sec) biosynthesis; L-seryl-tRNA(Sec) from L-serine and tRNA(Sec): step 1/1. Catalyzes the attachment of serine to tRNA(Ser). Is also able to aminoacylate tRNA(Sec) with serine, to form the misacylated tRNA L-seryl-tRNA(Sec), which will be further converted into selenocysteinyl-tRNA(Sec). The chain is Serine--tRNA ligase from Chlorobium luteolum (strain DSM 273 / BCRC 81028 / 2530) (Pelodictyon luteolum).